The chain runs to 311 residues: Putative dihydroorotate dehydrogenase A (fumarate) (311 aa).

Residues Lys-45, 69-73 (NSMGL), and Asn-128 contribute to the substrate site. 45–46 (KT) contributes to the FMN binding site. Asn-128 contributes to the FMN binding site. Residue Cys-131 is the Nucleophile of the active site. The FMN site is built by Lys-165 and Val-193. 194-195 (NS) is a substrate binding site. FMN-binding positions include Gly-220, 248–249 (GG), and 270–271 (GT).

Belongs to the dihydroorotate dehydrogenase family. Type 1 subfamily. As to quaternary structure, homodimer. It depends on FMN as a cofactor.

Its subcellular location is the cytoplasm. It catalyses the reaction (S)-dihydroorotate + fumarate = orotate + succinate. Its pathway is pyrimidine metabolism; UMP biosynthesis via de novo pathway. Its function is as follows. Catalyzes the conversion of dihydroorotate to orotate with fumarate as the electron acceptor. The polypeptide is Putative dihydroorotate dehydrogenase A (fumarate) (pyrD) (Streptococcus uberis (strain ATCC BAA-854 / 0140J)).